A 396-amino-acid chain; its full sequence is MAEKEHYVRTKPHVNIGTIGHVDHGKTTLTAAITTVLAKKGLAQAEDYSQIDAAPEEKERGITINTAHVEYETEKRHYAHMDAPGHADYIKNMITGAAQMDGAILVVAATDGPMPQTREHILLARQVGVNSIVVFLNKCDLVDDPELIDLVEMEVRDLLSEYGYPGDDVPVVRGSALKALEGDEEAQKKIEELMDVVDEYIPTPERETDKPFLMPVEDVFTITGRGTVASGRIDRGTVKVGDSVEIVGLVEKVLTSVVTGLEMFHKTLDLGEAGDNVGVLLRGVDRDQIVRGQVLAAPGSIKTHKTFKGQVYILSKDEGGRHTPFFSDYRPQFYFHTTDITGEIELPEGTEMVMPGDNTEFSVTLIKPAAIEVGTKFTIREGGRTVGAGQVTEIDD.

Residues 11-205 (KPHVNIGTIG…VVDEYIPTPE (195 aa)) enclose the tr-type G domain. The G1 stretch occupies residues 20–27 (GHVDHGKT). Residue 20 to 27 (GHVDHGKT) participates in GTP binding. Thr27 lines the Mg(2+) pocket. Residues 61–65 (GITIN) form a G2 region. The segment at 82-85 (DAPG) is G3. GTP contacts are provided by residues 82–86 (DAPGH) and 137–140 (NKCD). The segment at 137–140 (NKCD) is G4. Positions 175-177 (SAL) are G5.

It belongs to the TRAFAC class translation factor GTPase superfamily. Classic translation factor GTPase family. EF-Tu/EF-1A subfamily. In terms of assembly, monomer.

The protein resides in the cytoplasm. It catalyses the reaction GTP + H2O = GDP + phosphate + H(+). In terms of biological role, GTP hydrolase that promotes the GTP-dependent binding of aminoacyl-tRNA to the A-site of ribosomes during protein biosynthesis. In Lactobacillus delbrueckii subsp. bulgaricus (strain ATCC 11842 / DSM 20081 / BCRC 10696 / JCM 1002 / NBRC 13953 / NCIMB 11778 / NCTC 12712 / WDCM 00102 / Lb 14), this protein is Elongation factor Tu.